Here is a 101-residue protein sequence, read N- to C-terminus: Apolipoprotein C-II (101 aa).

The signal sequence occupies residues 1 to 22 (MGTRFLLALCLVLLVLGFEVQG). Residues 23-28 (AQLPQQ) constitute a propeptide, removed in mature form. The tract at residues 66–74 (AVDEKLRDL) is lipid binding. Residues 78-101 (STAAMSTYTGIFTDQVLSVLKGEE) are lipoprotein lipase cofactor.

It belongs to the apolipoprotein C2 family. Post-translationally, proapolipoprotein C-II is synthesized as a sialic acid containing glycoprotein which is subsequently desialylated prior to its proteolytic processing. Proapolipoprotein C-II, the major form found in plasma undergoes proteolytic cleavage of its N-terminal hexapeptide to generate apolipoprotein C-II, which occurs as the minor form in plasma.

The protein resides in the secreted. Its function is as follows. Component of chylomicrons, very low-density lipoproteins (VLDL), low-density lipoproteins (LDL), and high-density lipoproteins (HDL) in plasma. Plays an important role in lipoprotein metabolism as an activator of lipoprotein lipase. Both proapolipoprotein C-II and apolipoprotein C-II can activate lipoprotein lipase. This Papio anubis (Olive baboon) protein is Apolipoprotein C-II (APOC2).